Here is a 605-residue protein sequence, read N- to C-terminus: MEAPIVLLLLLWLALAPTPGSASSEAPPLVNEDVKRTVDLSSHLAKVTAEVVLAHPGGGSTARASSFVLALEPELESRLAHLGVQVKGEDEEDNNLEVRETKMKGKSGRFFTVKLPVALDPGSKISIVVETVYTHVLHPYPTQITQSEKQFVVFEGNHYFYSPYPTKTQTMRVRLASRNVESHTKLGNPSRSEDILDYGPFKDIPAYSQDTFKVHYENNSPFLTITSMTRVIEVSHWGNIAVEENVDLKHTGAVLKGPFSRYDYQRQPDSGISSIRSFKTILPAAAQDVYYRDEIGNVSTSHLLILDDSVEMEIRPRFGLFGGWKTHYIVGYNLPSYEYLYNLGDQYALKMRFVDHVFDEQVIDSLTVKIILPEGAKNIQVDSPYDISRAPDELHYTYLDTFGRPVIVAYKKNLVEQHIQDIVVHYTFNKVLMLQEPLLVVAAFYILFFTVIIYVRLDFSITKDPAAEARMKVACITEQVLTLVNKRLGLYRHFDETVNRYKQSRDISTLNSGKKSLETEHKAVTSEIAVLQSRLKTEGSDLCDRVSEMQKLDAQVKELVLKSAVEAERLVAGKLKKDTYIENEKLSSGKRQELVTKIDHILDAL.

The signal sequence occupies residues 1 to 22; sequence MEAPIVLLLLLWLALAPTPGSA. Topologically, residues 23 to 437 are lumenal; sequence SSEAPPLVNE…FNKVLMLQEP (415 aa). Lysine 185 is modified (N6-acetyllysine). N-linked (GlcNAc...) asparagine glycosylation is present at asparagine 297. Residues 438 to 455 form a helical membrane-spanning segment; sequence LLVVAAFYILFFTVIIYV. The Cytoplasmic segment spans residues 456–605; that stretch reads RLDFSITKDP…TKIDHILDAL (150 aa). Lysine 536 is modified (N6-acetyllysine; alternate). Lysine 536 is covalently cross-linked (Glycyl lysine isopeptide (Lys-Gly) (interchain with G-Cter in SUMO2); alternate).

Belongs to the OST1 family. Component of the oligosaccharyltransferase (OST) complex. OST exists in two different complex forms which contain common core subunits RPN1, RPN2, OST48, OST4, DAD1 and TMEM258, either STT3A or STT3B as catalytic subunits, and form-specific accessory subunits. STT3A complex assembly occurs through the formation of 3 subcomplexes. Subcomplex 1 contains RPN1 and TMEM258, subcomplex 2 contains the STT3A-specific subunits STT3A, DC2/OSTC, and KCP2 as well as the core subunit OST4, and subcomplex 3 contains RPN2, DAD1, and OST48. The STT3A complex can form stable complexes with the Sec61 complex or with both the Sec61 and TRAP complexes. Interacts with TMEM35A/NACHO. Post-translationally, ubiquitinated by the ECS(ASB11) complex. Ufmylated by UFL1 in response to endoplasmic reticulum stress, promoting reticulophagy of endoplasmic reticulum sheets. In terms of tissue distribution, expressed in all tissues tested.

Its subcellular location is the endoplasmic reticulum membrane. It functions in the pathway protein modification; protein glycosylation. Functionally, subunit of the oligosaccharyl transferase (OST) complex that catalyzes the initial transfer of a defined glycan (Glc(3)Man(9)GlcNAc(2) in eukaryotes) from the lipid carrier dolichol-pyrophosphate to an asparagine residue within an Asn-X-Ser/Thr consensus motif in nascent polypeptide chains, the first step in protein N-glycosylation. N-glycosylation occurs cotranslationally and the complex associates with the Sec61 complex at the channel-forming translocon complex that mediates protein translocation across the endoplasmic reticulum (ER). All subunits are required for a maximal enzyme activity. In Rattus norvegicus (Rat), this protein is Dolichyl-diphosphooligosaccharide--protein glycosyltransferase subunit 1.